The chain runs to 161 residues: Large ribosomal subunit protein bL21m (161 aa).

The transit peptide at methionine 1–serine 35 directs the protein to the mitochondrion.

This sequence belongs to the bacterial ribosomal protein bL21 family. Component of the mitochondrial large ribosomal subunit (mt-LSU). Mature yeast 74S mitochondrial ribosomes consist of a small (37S) and a large (54S) subunit. The 37S small subunit contains a 15S ribosomal RNA (15S mt-rRNA) and 34 different proteins. The 54S large subunit contains a 21S rRNA (21S mt-rRNA) and 46 different proteins.

It is found in the mitochondrion. Component of the mitochondrial ribosome (mitoribosome), a dedicated translation machinery responsible for the synthesis of mitochondrial genome-encoded proteins, including at least some of the essential transmembrane subunits of the mitochondrial respiratory chain. The mitoribosomes are attached to the mitochondrial inner membrane and translation products are cotranslationally integrated into the membrane. The sequence is that of Large ribosomal subunit protein bL21m (MRPL49) from Saccharomyces cerevisiae (strain ATCC 204508 / S288c) (Baker's yeast).